A 188-amino-acid chain; its full sequence is Ion-translocating oxidoreductase complex subunit B (188 aa).

Residues 1–26 are hydrophobic; that stretch reads MNGVFLAIGALLPICLAGGALLGYAA. In terms of domain architecture, 4Fe-4S spans 32 to 90; the sequence is QGDPVAEQVNALLPQTQCGQCGYPGCKPYAEAIAAGDKINKCPPGGEATIRALADLLDL. Residues Cys49, Cys52, Cys57, Cys73, Cys113, Cys116, Cys119, Cys123, Cys143, Cys146, Cys149, and Cys153 each contribute to the [4Fe-4S] cluster site. 2 consecutive 4Fe-4S ferredoxin-type domains span residues 104-133 and 134-163; these read RVAY…GAAR and LMHT…MRET.

This sequence belongs to the 4Fe4S bacterial-type ferredoxin family. RnfB subfamily. In terms of assembly, the complex is composed of six subunits: RnfA, RnfB, RnfC, RnfD, RnfE and RnfG. [4Fe-4S] cluster serves as cofactor.

The protein resides in the cell inner membrane. In terms of biological role, part of a membrane-bound complex that couples electron transfer with translocation of ions across the membrane. This chain is Ion-translocating oxidoreductase complex subunit B, found in Pseudomonas aeruginosa (strain UCBPP-PA14).